A 1249-amino-acid chain; its full sequence is Nuclear envelope pore membrane protein POM 121 (1249 aa).

Residues Met-1–Ala-10 show a composition bias toward low complexity. The disordered stretch occupies residues Met-1–Gly-27. Residues Met-1–Ala-34 form a cisternal side region. Residues Met-1 to Ser-285 are required for targeting to the nucleus and nuclear pore complex. Residues Gly-11–Gly-25 are compositionally biased toward basic and acidic residues. A helical transmembrane segment spans residues Val-35–Leu-55. The pore side stretch occupies residues Ala-56 to Lys-1249. Ser-94 is subject to Phosphoserine. Disordered regions lie at residues Leu-136 to Leu-220, Lys-319 to Ser-530, Lys-602 to Ser-776, Pro-959 to Ala-986, and Ile-1226 to Lys-1249. Positions Ala-168 to Pro-190 are enriched in pro residues. Phosphoserine occurs at positions 345, 351, 371, 393, and 396. The span at Ile-405–Ile-423 shows a compositional bias: polar residues. The segment covering Pro-432–Ser-445 has biased composition (low complexity). 2 stretches are compositionally biased toward basic and acidic residues: residues Arg-450–His-462 and Ala-472–Pro-486. Over residues Asn-491–Gly-502 the composition is skewed to polar residues. Residues Pro-635–Ser-652 show a composition bias toward low complexity. The span at Gln-683–Pro-696 shows a compositional bias: polar residues. 2 stretches are compositionally biased toward low complexity: residues Ser-712–Pro-726 and Ser-749–Thr-770. Residues Leu-1239 to Lys-1249 show a composition bias toward basic residues.

The protein belongs to the POM121 family.

The protein localises to the nucleus. Its subcellular location is the nuclear pore complex. The protein resides in the nucleus membrane. It is found in the endoplasmic reticulum membrane. Essential component of the nuclear pore complex (NPC). The repeat-containing domain may be involved in anchoring components of the pore complex to the pore membrane. When overexpressed in cells induces the formation of cytoplasmic annulate lamellae (AL). The protein is Nuclear envelope pore membrane protein POM 121 (POM121) of Homo sapiens (Human).